A 420-amino-acid chain; its full sequence is 5'-deoxyadenosine deaminase (420 aa).

Positions 55 and 57 each coordinate Zn(2+). Substrate is bound by residues Glu84 and His176. His203 contributes to the Zn(2+) binding site. The substrate site is built by Glu206 and Asp292. Asp292 serves as a coordination point for Zn(2+).

The protein belongs to the metallo-dependent hydrolases superfamily. MTA/SAH deaminase family. As to quaternary structure, homotetramer. Zn(2+) is required as a cofactor.

The catalysed reaction is 5'-deoxyadenosine + H2O + H(+) = 5'-deoxyinosine + NH4(+). The enzyme catalyses S-adenosyl-L-homocysteine + H2O + H(+) = S-inosyl-L-homocysteine + NH4(+). It catalyses the reaction S-methyl-5'-thioadenosine + H2O + H(+) = S-methyl-5'-thioinosine + NH4(+). It carries out the reaction adenosine + H2O + H(+) = inosine + NH4(+). It participates in amino-acid biosynthesis; S-adenosyl-L-methionine biosynthesis. Its function is as follows. Catalyzes the deamination of three SAM-derived enzymatic products, namely 5'-deoxyadenosine, S-adenosyl-L-homocysteine, and 5'-methylthioadenosine, to produce the inosine analogs. Can also deaminate adenosine. The preferred substrate for this enzyme is 5'-deoxyadenosine, but all these substrates are efficiently deaminated. Likely functions in a S-adenosyl-L-methionine (SAM) recycling pathway from S-adenosyl-L-homocysteine (SAH) produced from SAM-dependent methylation reactions. May also be involved in the recycling of 5'-deoxyadenosine, whereupon the 5'-deoxyribose moiety of 5'-deoxyinosine is further metabolized to deoxyhexoses used for the biosynthesis of aromatic amino acids in methanogens. The protein is 5'-deoxyadenosine deaminase of Methanocaldococcus jannaschii (strain ATCC 43067 / DSM 2661 / JAL-1 / JCM 10045 / NBRC 100440) (Methanococcus jannaschii).